Here is a 62-residue protein sequence, read N- to C-terminus: Beta-defensin 10 (62 aa).

Residues 1–22 (MRLHHLLLLLLLVVLSSGSGFT) form the signal peptide. Position 23 is a pyrrolidone carboxylic acid (glutamine 23). 3 cysteine pairs are disulfide-bonded: cysteine 31–cysteine 60, cysteine 38–cysteine 53, and cysteine 43–cysteine 61.

Belongs to the beta-defensin family. Neutrophilic granules.

Its subcellular location is the secreted. Has bactericidal activity. Active against E.coli ML35 and S.aureus 502A. The sequence is that of Beta-defensin 10 (DEFB10) from Bos taurus (Bovine).